A 406-amino-acid chain; its full sequence is 4-hydroxy-3-methylbut-2-en-1-yl diphosphate synthase (ferredoxin) (406 aa).

4 residues coordinate [4Fe-4S] cluster: Cys-313, Cys-316, Cys-347, and Glu-354.

The protein belongs to the IspG family. The cofactor is [4Fe-4S] cluster.

It carries out the reaction (2E)-4-hydroxy-3-methylbut-2-enyl diphosphate + 2 oxidized [2Fe-2S]-[ferredoxin] + H2O = 2-C-methyl-D-erythritol 2,4-cyclic diphosphate + 2 reduced [2Fe-2S]-[ferredoxin] + H(+). The protein operates within isoprenoid biosynthesis; isopentenyl diphosphate biosynthesis via DXP pathway; isopentenyl diphosphate from 1-deoxy-D-xylulose 5-phosphate: step 5/6. In terms of biological role, converts 2C-methyl-D-erythritol 2,4-cyclodiphosphate (ME-2,4cPP) into 1-hydroxy-2-methyl-2-(E)-butenyl 4-diphosphate. The polypeptide is 4-hydroxy-3-methylbut-2-en-1-yl diphosphate synthase (ferredoxin) (Picosynechococcus sp. (strain ATCC 27264 / PCC 7002 / PR-6) (Agmenellum quadruplicatum)).